Consider the following 41-residue polypeptide: Pi-stichotoxin-Hcr5b (41 aa).

3 disulfides stabilise this stretch: C4–C37, C6–C30, and C20–C38.

Belongs to the sea anemone type 3 (BDS) potassium channel toxin family.

It is found in the secreted. Its subcellular location is the nematocyst. Remarkably non-selective toxin, with activity on many different ion channels. Weakly and reversibly inhibits rat and human homomeric ASIC1 (isoform ASIC1a) (IC(50)=4.8 uM, and IC(50)=14.6 uM), and ASIC3 (IC(50)=15.9 uM). Molecular modeling interaction with ASIC1a suggests that this peptide hinders the collapse of acidic pockets and stabilizes nonconducting channels state. It activates several potassium channels including Kv1.1/KCNA1, Kv1.2/KCNA2, and drosophila Shaker IR. It moderately to potently inhibits potassium channels including Kv1.3/KCNA3, Kv1.4/KCNA4, Kv1.5/KCNA5, Kv1.6/KCNA6, Kv2.1/KCNB1, Kv4.2/KCND2, Kv7.1/KCNQ1, Kv7.2/Kv7.3 (KCNQ2/KCNQ3), Kv7.4/KCNQ4, hERG/KCNH2, and C.elegans QKT1. On sodium channels, it moderately to potently inhibits Nav1.1/SCN1A, Nav1.2/SCN2A, Nav1.3/SCN3A, Nav1.4/SCN4A, Nav1.5/SCN5A, Nav1.6/SCN8A, Nav1.7/SCN9A, Nav1.8/SCN10A, and B.germanica BgNav. It also moderately to potently inhibits Cav3.1/CACNA1G, Cav3.2/CACNA1H, and Cav3.3/CACNA1I. Significant shifts in the voltage-current relationship are observed on Kv and Nav, depending on the channel isoform, whereas the toxin does not seem to modulate the voltage-sensor domains of Cav channels, acting mainly as a pore blocker. Does not activate nicotinic acetylcholine receptors (nAChR), but potentiates ACh-elicited current of human alpha-7/CHRNA7 nAChR. Is also able to bind T.californica muscle-type nAChRs. In vivo, causes an excitatory effect in mice behavior. Also shows antihyperalgesic and analgesic activity in the acid-induced muscle pain mice model, and weak anti-inflammatory effect in models of acute local inflammation. The protein is Pi-stichotoxin-Hcr5b of Radianthus crispa (Leathery sea anemone).